A 611-amino-acid polypeptide reads, in one-letter code: Elongation factor 4 (611 aa).

A tr-type G domain is found at 11-193 (EKIRNFSIIA…QVVEYVPAPS (183 aa)). Residues 23 to 28 (DHGKST) and 140 to 143 (NKID) each bind GTP.

It belongs to the TRAFAC class translation factor GTPase superfamily. Classic translation factor GTPase family. LepA subfamily.

The protein localises to the cell membrane. The catalysed reaction is GTP + H2O = GDP + phosphate + H(+). Its function is as follows. Required for accurate and efficient protein synthesis under certain stress conditions. May act as a fidelity factor of the translation reaction, by catalyzing a one-codon backward translocation of tRNAs on improperly translocated ribosomes. Back-translocation proceeds from a post-translocation (POST) complex to a pre-translocation (PRE) complex, thus giving elongation factor G a second chance to translocate the tRNAs correctly. Binds to ribosomes in a GTP-dependent manner. In Enterococcus faecalis (strain ATCC 700802 / V583), this protein is Elongation factor 4.